The chain runs to 200 residues: Neutrophil gelatinase-associated lipocalin (200 aa).

The N-terminal stretch at 1–20 (MALSVMCLGLALLGVLQSQA) is a signal peptide. Gln21 carries the pyrrolidone carboxylic acid modification. 72-74 (YST) provides a ligand contact to a carboxymycobactin. Residues Asn81 and Asn85 are each glycosylated (N-linked (GlcNAc...) asparagine). The cysteines at positions 98 and 197 are disulfide-linked. Residue Tyr128 participates in enterobactin binding. A carboxymycobactin is bound by residues Lys147, Lys156, and Tyr160. Lys156 contributes to the enterobactin binding site.

The protein belongs to the calycin superfamily. Lipocalin family. Monomer. Homodimer; disulfide-linked. Heterodimer; disulfide-linked with MMP9. In terms of processing, N-glycosylated. In terms of tissue distribution, expressed in the cortical tubules of the kidney (at protein level). Also expressed in the medullary tubules of the kidney. Detected in lung, spleen, uterus, vagina and epididymis.

It localises to the secreted. The protein resides in the cytoplasmic granule lumen. Its subcellular location is the cytoplasmic vesicle lumen. Functionally, iron-trafficking protein involved in multiple processes such as apoptosis, innate immunity and renal development. Binds iron through association with 2,3-dihydroxybenzoic acid (2,3-DHBA), a siderophore that shares structural similarities with bacterial enterobactin, and delivers or removes iron from the cell, depending on the context. Iron-bound form (holo-24p3) is internalized following binding to the SLC22A17 (24p3R) receptor, leading to release of iron and subsequent increase of intracellular iron concentration. In contrast, association of the iron-free form (apo-24p3) with the SLC22A17 (24p3R) receptor is followed by association with an intracellular siderophore, iron chelation and iron transfer to the extracellular medium, thereby reducing intracellular iron concentration. Involved in apoptosis due to interleukin-3 (IL3) deprivation: iron-loaded form increases intracellular iron concentration without promoting apoptosis, while iron-free form decreases intracellular iron levels, inducing expression of the proapoptotic protein BCL2L11/BIM, resulting in apoptosis. Involved in innate immunity; limits bacterial proliferation by sequestering iron bound to microbial siderophores, such as enterobactin. Can also bind siderophores from M.tuberculosis. This is Neutrophil gelatinase-associated lipocalin (Lcn2) from Mus musculus (Mouse).